The chain runs to 622 residues: DNA-directed RNA polymerase subunit gamma (622 aa).

Zn(2+) contacts are provided by C70, C72, C85, and C88. 3 residues coordinate Mg(2+): D466, D468, and D470.

It belongs to the RNA polymerase beta' chain family. RpoC1 subfamily. In terms of assembly, in cyanobacteria the RNAP catalytic core is composed of 2 alpha, 1 beta, 1 beta', 1 gamma and 1 omega subunit. When a sigma factor is associated with the core the holoenzyme is formed, which can initiate transcription. Mg(2+) is required as a cofactor. It depends on Zn(2+) as a cofactor.

It carries out the reaction RNA(n) + a ribonucleoside 5'-triphosphate = RNA(n+1) + diphosphate. Its function is as follows. DNA-dependent RNA polymerase catalyzes the transcription of DNA into RNA using the four ribonucleoside triphosphates as substrates. The polypeptide is DNA-directed RNA polymerase subunit gamma (Thermosynechococcus vestitus (strain NIES-2133 / IAM M-273 / BP-1)).